Consider the following 290-residue polypeptide: Nucleotide-binding protein BPP4038 (290 aa).

Position 9 to 16 (9 to 16 (GISGSGKS)) interacts with ATP. 58–61 (DVRS) serves as a coordination point for GTP.

This sequence belongs to the RapZ-like family.

Its function is as follows. Displays ATPase and GTPase activities. The sequence is that of Nucleotide-binding protein BPP4038 from Bordetella parapertussis (strain 12822 / ATCC BAA-587 / NCTC 13253).